Reading from the N-terminus, the 326-residue chain is Undecaprenyl-phosphate 4-deoxy-4-formamido-L-arabinose transferase (326 aa).

Over 1 to 235 (MFEIHPIKKV…TCLTTTPLRM (235 aa)) the chain is Cytoplasmic. Residues 236–256 (LSLLGSIIATSGFSLAILLVV) form a helical membrane-spanning segment. At 257-269 (LRLAFGSQWSGEG) the chain is on the periplasmic side. A helical membrane pass occupies residues 270-290 (VFMLFAVLFTFIGAQFIGMGL). Over 291–326 (LGEYIGRIYNDVRARPRYFVQKVIRPASSIDIEENH) the chain is Cytoplasmic.

It belongs to the glycosyltransferase 2 family.

The protein resides in the cell inner membrane. The enzyme catalyses UDP-4-deoxy-4-formamido-beta-L-arabinose + di-trans,octa-cis-undecaprenyl phosphate = 4-deoxy-4-formamido-alpha-L-arabinopyranosyl di-trans,octa-cis-undecaprenyl phosphate + UDP. Its pathway is glycolipid biosynthesis; 4-amino-4-deoxy-alpha-L-arabinose undecaprenyl phosphate biosynthesis; 4-amino-4-deoxy-alpha-L-arabinose undecaprenyl phosphate from UDP-4-deoxy-4-formamido-beta-L-arabinose and undecaprenyl phosphate: step 1/2. It participates in bacterial outer membrane biogenesis; lipopolysaccharide biosynthesis. In terms of biological role, catalyzes the transfer of 4-deoxy-4-formamido-L-arabinose from UDP to undecaprenyl phosphate. The modified arabinose is attached to lipid A and is required for resistance to polymyxin and cationic antimicrobial peptides. In Escherichia fergusonii (strain ATCC 35469 / DSM 13698 / CCUG 18766 / IAM 14443 / JCM 21226 / LMG 7866 / NBRC 102419 / NCTC 12128 / CDC 0568-73), this protein is Undecaprenyl-phosphate 4-deoxy-4-formamido-L-arabinose transferase.